The chain runs to 410 residues: Peptidase T (410 aa).

Position 79 (His79) interacts with Zn(2+). Residue Asp81 is part of the active site. Asp142 contacts Zn(2+). Residue Glu176 is the Proton acceptor of the active site. Residues Glu177, Asp199, and His381 each coordinate Zn(2+).

The protein belongs to the peptidase M20B family. Zn(2+) is required as a cofactor.

It localises to the cytoplasm. The enzyme catalyses Release of the N-terminal residue from a tripeptide.. Functionally, cleaves the N-terminal amino acid of tripeptides. The sequence is that of Peptidase T from Bacillus velezensis (strain DSM 23117 / BGSC 10A6 / LMG 26770 / FZB42) (Bacillus amyloliquefaciens subsp. plantarum).